The following is a 74-amino-acid chain: Brevinin-2CG1 (74 aa).

Residues 1 to 22 form the signal peptide; that stretch reads MFTMKKSMLVLFFLGTISLSLC. A propeptide spans 23–39 (removed in mature form); sequence EEERNADEDDGEMTEEV. C68 and C74 are oxidised to a cystine.

In terms of tissue distribution, expressed by the skin glands.

The protein resides in the secreted. Functionally, antimicrobial peptide active against a variety of Gram-positive and some Gram-negative bacterial strains. Has antifungal activity against a slime mold isolate. Has hemolytic activity against human erythrocytes. The chain is Brevinin-2CG1 from Amolops chunganensis (Chungan torrent frog).